The sequence spans 346 residues: Holliday junction branch migration complex subunit RuvB (346 aa).

Positions 1-183 are large ATPase domain (RuvB-L); sequence MTEQRIIASS…FGIVQRLEFY (183 aa). Residues I22, R23, G64, K67, T68, T69, 130–132, R173, Y183, and R220 contribute to the ATP site; that span reads EDF. T68 is a binding site for Mg(2+). A small ATPAse domain (RuvB-S) region spans residues 184–254; that stretch reads SPQELTRIVI…VAQAAMQMLK (71 aa). A head domain (RuvB-H) region spans residues 257–346; sequence PEGFDELDRR…PGIGEPGDLF (90 aa). Residues R293, R312, and R317 each coordinate DNA.

This sequence belongs to the RuvB family. As to quaternary structure, homohexamer. Forms an RuvA(8)-RuvB(12)-Holliday junction (HJ) complex. HJ DNA is sandwiched between 2 RuvA tetramers; dsDNA enters through RuvA and exits via RuvB. An RuvB hexamer assembles on each DNA strand where it exits the tetramer. Each RuvB hexamer is contacted by two RuvA subunits (via domain III) on 2 adjacent RuvB subunits; this complex drives branch migration. In the full resolvosome a probable DNA-RuvA(4)-RuvB(12)-RuvC(2) complex forms which resolves the HJ.

The protein resides in the cytoplasm. It catalyses the reaction ATP + H2O = ADP + phosphate + H(+). Its function is as follows. The RuvA-RuvB-RuvC complex processes Holliday junction (HJ) DNA during genetic recombination and DNA repair, while the RuvA-RuvB complex plays an important role in the rescue of blocked DNA replication forks via replication fork reversal (RFR). RuvA specifically binds to HJ cruciform DNA, conferring on it an open structure. The RuvB hexamer acts as an ATP-dependent pump, pulling dsDNA into and through the RuvAB complex. RuvB forms 2 homohexamers on either side of HJ DNA bound by 1 or 2 RuvA tetramers; 4 subunits per hexamer contact DNA at a time. Coordinated motions by a converter formed by DNA-disengaged RuvB subunits stimulates ATP hydrolysis and nucleotide exchange. Immobilization of the converter enables RuvB to convert the ATP-contained energy into a lever motion, pulling 2 nucleotides of DNA out of the RuvA tetramer per ATP hydrolyzed, thus driving DNA branch migration. The RuvB motors rotate together with the DNA substrate, which together with the progressing nucleotide cycle form the mechanistic basis for DNA recombination by continuous HJ branch migration. Branch migration allows RuvC to scan DNA until it finds its consensus sequence, where it cleaves and resolves cruciform DNA. The chain is Holliday junction branch migration complex subunit RuvB from Xanthomonas axonopodis pv. citri (strain 306).